We begin with the raw amino-acid sequence, 93 residues long: Small ribosomal subunit protein uS19 (93 aa).

This sequence belongs to the universal ribosomal protein uS19 family.

Protein S19 forms a complex with S13 that binds strongly to the 16S ribosomal RNA. The chain is Small ribosomal subunit protein uS19 from Helicobacter acinonychis (strain Sheeba).